The following is a 270-amino-acid chain: 3-methyl-2-oxobutanoate hydroxymethyltransferase (270 aa).

Residues Asp-48 and Asp-87 each contribute to the Mg(2+) site. 3-methyl-2-oxobutanoate is bound by residues 48–49, Asp-87, and Lys-117; that span reads DS. Residue Glu-119 participates in Mg(2+) binding. Catalysis depends on Glu-186, which acts as the Proton acceptor.

The protein belongs to the PanB family. As to quaternary structure, homodecamer; pentamer of dimers. Mg(2+) serves as cofactor.

It is found in the cytoplasm. The catalysed reaction is 3-methyl-2-oxobutanoate + (6R)-5,10-methylene-5,6,7,8-tetrahydrofolate + H2O = 2-dehydropantoate + (6S)-5,6,7,8-tetrahydrofolate. It participates in cofactor biosynthesis; (R)-pantothenate biosynthesis; (R)-pantoate from 3-methyl-2-oxobutanoate: step 1/2. Functionally, catalyzes the reversible reaction in which hydroxymethyl group from 5,10-methylenetetrahydrofolate is transferred onto alpha-ketoisovalerate to form ketopantoate. This Synechococcus sp. (strain RCC307) protein is 3-methyl-2-oxobutanoate hydroxymethyltransferase.